Consider the following 594-residue polypeptide: Zinc finger protein 37 (594 aa).

The interval 1–253 is disordered; that stretch reads MATSEPAESD…KPEKAPGSGK (253 aa). Thr-3 is modified (phosphothreonine). The 72-residue stretch at 3–74 folds into the KRAB domain; that stretch reads TSEPAESDAV…GKKASPSSLK (72 aa). Ser-9 carries the phosphoserine modification. A compositionally biased stretch (basic and acidic residues) spans 10–33; sequence DAVRAKEWEQLEPVQRDVYKDTKL. The span at 34–46 shows a compositional bias: polar residues; that stretch reads ENCSNPASMGNQD. The span at 89–111 shows a compositional bias: basic and acidic residues; sequence QQDDEHREEKQKSQSKLTKEVTL. Residues 145–158 show a composition bias toward polar residues; sequence KSSSRGKNSNQNSD. Composition is skewed to basic and acidic residues over residues 159 to 172 and 181 to 234; these read SLKK…DHRK and VNKD…TGEK. C2H2-type zinc fingers lie at residues 255-277, 283-305, 311-324, 339-361, 367-389, 395-417, 423-445, 451-473, 479-501, 507-529, 535-557, and 563-585; these read YECN…QRTH, YECE…GHKH, YKCN…LRSH, YECK…VRTH, YECN…MRIH, FECN…QRTH, YKCD…MRTH, FECN…QRVH, YECV…QRTH, FECY…QRSH, and YECI…MKIH.

The protein belongs to the krueppel C2H2-type zinc-finger protein family. In terms of tissue distribution, expressed in testis and brain.

It is found in the nucleus. May have a role in regulating spermiogenesis. The protein is Zinc finger protein 37 (Zfp37) of Mus musculus (Mouse).